We begin with the raw amino-acid sequence, 200 residues long: LexA repressor (200 aa).

Positions arginine 28–lysine 48 form a DNA-binding region, H-T-H motif. Residues serine 118 and lysine 155 each act as for autocatalytic cleavage activity in the active site.

It belongs to the peptidase S24 family. Homodimer.

It catalyses the reaction Hydrolysis of Ala-|-Gly bond in repressor LexA.. In terms of biological role, represses a number of genes involved in the response to DNA damage (SOS response), including recA and lexA. In the presence of single-stranded DNA, RecA interacts with LexA causing an autocatalytic cleavage which disrupts the DNA-binding part of LexA, leading to derepression of the SOS regulon and eventually DNA repair. The sequence is that of LexA repressor from Teredinibacter turnerae (strain ATCC 39867 / T7901).